Reading from the N-terminus, the 568-residue chain is Urease subunit alpha (568 aa).

The region spanning 130-568 (GGIDTHIHFI…LPMAQRYFLF (439 aa)) is the Urease domain. Ni(2+) contacts are provided by His-135, His-137, and Lys-218. Lys-218 carries the post-translational modification N6-carboxylysine. Position 220 (His-220) interacts with substrate. Ni(2+)-binding residues include His-247 and His-273. The Proton donor role is filled by His-321. Asp-361 is a Ni(2+) binding site.

It belongs to the metallo-dependent hydrolases superfamily. Urease alpha subunit family. Heterotrimer of UreA (gamma), UreB (beta) and UreC (alpha) subunits. Three heterotrimers associate to form the active enzyme. The cofactor is Ni cation. Carboxylation allows a single lysine to coordinate two nickel ions.

The protein resides in the cytoplasm. It catalyses the reaction urea + 2 H2O + H(+) = hydrogencarbonate + 2 NH4(+). The protein operates within nitrogen metabolism; urea degradation; CO(2) and NH(3) from urea (urease route): step 1/1. The chain is Urease subunit alpha from Burkholderia pseudomallei (strain K96243).